The primary structure comprises 1164 residues: Toxin subunit YenA1 (1164 aa).

The segment at 106 to 131 is disordered; sequence RLEKSNSPLVPQTSSSTDASSESQTN. The span at 118–130 shows a compositional bias: low complexity; sequence TSSSTDASSESQT.

Semipurified toxin complex consists of at least YenA1, YenA2, YenB, YenC1, YenC2, Chi1 and Chi2. The Yen-TC:K9 subcomplex is about 26 nm tall and 22 nm in diameter with 5-fold symmetry and 5 copies of YenA1, YenA2, Chi1 and Chi2; the chitinase subunits may be solvent accessible on the exterior the complex. The Yen-TC:K9 subcomplex has no insecticidal activity. The native complex with additional YenB, YenC1 and YenC2 subunits is 16 nm taller and is insecticidal; the toxicity-conferring subunits are present at about 1 copy each.

It is found in the secreted. Its activity is regulated as follows. Toxin complex is secreted when grown at 25 degrees Celsius or less; at higher temperatures the proteins are present intracellularly but not secreted. In terms of biological role, part of an orally active toxin complex (TC) with strong insecticidal effects on larvae of the Coleoptera Costelytra zealandica, Acrossidius tasmania and Adoryphorus couloni and some Lepidoptera larvae. The TC has an endochitinase activity. In Yersinia entomophaga, this protein is Toxin subunit YenA1.